The primary structure comprises 403 residues: Phosphoglycerate kinase (403 aa).

Residues 21-23, Arg36, 59-62, Arg119, and Arg159 each bind substrate; these read DFN and HLGR. ATP contacts are provided by residues Lys214, Gly301, Glu332, and 359-362; that span reads GGDS.

This sequence belongs to the phosphoglycerate kinase family. Monomer.

The protein localises to the cytoplasm. The enzyme catalyses (2R)-3-phosphoglycerate + ATP = (2R)-3-phospho-glyceroyl phosphate + ADP. It functions in the pathway carbohydrate degradation; glycolysis; pyruvate from D-glyceraldehyde 3-phosphate: step 2/5. The sequence is that of Phosphoglycerate kinase from Lactobacillus acidophilus (strain ATCC 700396 / NCK56 / N2 / NCFM).